Here is a 34-residue protein sequence, read N- to C-terminus: Mu-conotoxin GS (34 aa).

3 cysteine pairs are disulfide-bonded: Cys2-Cys14, Cys9-Cys19, and Cys13-Cys27. 4-hydroxyproline occurs at positions 10 and 11. Glu32 bears the 4-carboxyglutamate mark.

In terms of tissue distribution, expressed by the venom duct.

Its subcellular location is the secreted. Its function is as follows. Mu-conotoxins block voltage-gated sodium channels (Nav). No effect was observed upon injections into mice and goldfish (25 ug). The protein is Mu-conotoxin GS of Conus geographus (Geography cone).